The sequence spans 940 residues: Mating-type protein A-alpha Z4 (940 aa).

A DNA-binding region (homeobox; TALE-type) is located at residues 110–182; sequence GAELSATPLP…AARARMGWGD (73 aa). Disordered regions lie at residues 333–618, 633–762, 832–863, and 877–912; these read KQRQ…TGDP, PRDL…GLRP, GQKA…SSLV, and EAPK…DTVR. The span at 337 to 360 shows a compositional bias: basic and acidic residues; the sequence is ARREQRRAQKDRMDAQRRAEDRKC. Acidic residues-rich tracts occupy residues 376-400 and 427-469; these read ESDE…DGED and ATED…EEEE. Composition is skewed to low complexity over residues 516–531, 582–611, and 657–693; these read PSSR…SPSP, VRSR…PSGG, and SRSL…SDAT. Acidic residues predominate over residues 694–703; it reads DITEPDEATT. Low complexity predominate over residues 704-724; that stretch reads ADETTTQSTSASSSRDTTSQQ. The span at 877–896 shows a compositional bias: basic and acidic residues; the sequence is EAPKPAKAPKNDRRYLERRE.

It belongs to the TALE/M-ATYP homeobox family.

The protein localises to the nucleus. In terms of biological role, specifies A-alpha-4 mating-type. May regulate the expression of genes specific to the homokaryotic cell type. This Schizophyllum commune (Split gill fungus) protein is Mating-type protein A-alpha Z4.